The chain runs to 84 residues: Large ribosomal subunit protein eL34 (84 aa).

The protein belongs to the eukaryotic ribosomal protein eL34 family.

The chain is Large ribosomal subunit protein eL34 from Pyrobaculum calidifontis (strain DSM 21063 / JCM 11548 / VA1).